Reading from the N-terminus, the 93-residue chain is Parbolysin P5 (93 aa).

Intrachain disulfides connect Cys16–Cys37, Cys22–Cys33, and Cys47–Cys60.

This sequence belongs to the worm cytolysin family. As to expression, localized within the skin and proboscis and are most readily isolated from body mucus secretions.

The protein localises to the secreted. Its function is as follows. Cytolysin that shows hemolytic activity (on bovine erythrocytes, HC(50)=5.75 mg/ml). This hemolytic activity is completely inhibited by small unilamelar vesicles composed of PC/PG, PC/PI and PC/PS in 1:1 molar ratios (with at least 100 mg/ml concentration). The chain is Parbolysin P5 from Parborlasia corrugatus (Antarctic nemertean worm).